The primary structure comprises 89 residues: Small ribosomal subunit protein uS15 (89 aa).

Belongs to the universal ribosomal protein uS15 family. As to quaternary structure, part of the 30S ribosomal subunit. Forms a bridge to the 50S subunit in the 70S ribosome, contacting the 23S rRNA.

Its function is as follows. One of the primary rRNA binding proteins, it binds directly to 16S rRNA where it helps nucleate assembly of the platform of the 30S subunit by binding and bridging several RNA helices of the 16S rRNA. In terms of biological role, forms an intersubunit bridge (bridge B4) with the 23S rRNA of the 50S subunit in the ribosome. This Acholeplasma laidlawii (strain PG-8A) protein is Small ribosomal subunit protein uS15.